Consider the following 321-residue polypeptide: Lipoyl synthase (321 aa).

[4Fe-4S] cluster is bound by residues C68, C73, C79, C94, C98, C101, and S308. One can recognise a Radical SAM core domain in the interval 80–297 (FNHGTATFMI…KEIALELGFT (218 aa)).

It belongs to the radical SAM superfamily. Lipoyl synthase family. [4Fe-4S] cluster serves as cofactor.

It is found in the cytoplasm. It carries out the reaction [[Fe-S] cluster scaffold protein carrying a second [4Fe-4S](2+) cluster] + N(6)-octanoyl-L-lysyl-[protein] + 2 oxidized [2Fe-2S]-[ferredoxin] + 2 S-adenosyl-L-methionine + 4 H(+) = [[Fe-S] cluster scaffold protein] + N(6)-[(R)-dihydrolipoyl]-L-lysyl-[protein] + 4 Fe(3+) + 2 hydrogen sulfide + 2 5'-deoxyadenosine + 2 L-methionine + 2 reduced [2Fe-2S]-[ferredoxin]. It functions in the pathway protein modification; protein lipoylation via endogenous pathway; protein N(6)-(lipoyl)lysine from octanoyl-[acyl-carrier-protein]: step 2/2. Catalyzes the radical-mediated insertion of two sulfur atoms into the C-6 and C-8 positions of the octanoyl moiety bound to the lipoyl domains of lipoate-dependent enzymes, thereby converting the octanoylated domains into lipoylated derivatives. The sequence is that of Lipoyl synthase from Aliivibrio fischeri (strain ATCC 700601 / ES114) (Vibrio fischeri).